The sequence spans 119 residues: Large ribosomal subunit protein bL20 (119 aa).

Belongs to the bacterial ribosomal protein bL20 family.

Binds directly to 23S ribosomal RNA and is necessary for the in vitro assembly process of the 50S ribosomal subunit. It is not involved in the protein synthesizing functions of that subunit. This chain is Large ribosomal subunit protein bL20, found in Dechloromonas aromatica (strain RCB).